We begin with the raw amino-acid sequence, 272 residues long: METLELQGAKLRYHQVGQGPVLIFIPGANGTGDIFLPLAEQLKDHFTVVAVDRRDYGESELTEPLPDSASNPDSDYRVKRDAQDIAELAKSLSDEPVYILGSIVAMHVLKDYPEVVKKIAFHEPPINTFLPDSTYWKDKNDDIVHQILTEGLEKGMKTFGETLNIAPIDAKMMSQPADTEEGRIEQYKRTMFWSEFEIRQYTHSDITLDDFTKYSDKITLLNGTDSRGSFPQDVNFYINKETSIPIVDIPGGHLGYIQKPEGFADVLLNMWG.

Positions 20–133 constitute an AB hydrolase-1 domain; the sequence is PVLIFIPGAN…PPINTFLPDS (114 aa).

Belongs to the AB hydrolase superfamily.

This is an uncharacterized protein from Staphylococcus aureus (strain MSSA476).